The sequence spans 264 residues: Type III pantothenate kinase (264 aa).

Residue aspartate 6–valine 13 coordinates ATP. Substrate contacts are provided by residues tyrosine 100 and glycine 107–arginine 110. The active-site Proton acceptor is aspartate 109. Aspartate 129 provides a ligand contact to K(+). Threonine 132 contributes to the ATP binding site. Substrate is bound at residue threonine 185.

This sequence belongs to the type III pantothenate kinase family. As to quaternary structure, homodimer. NH4(+) serves as cofactor. Requires K(+) as cofactor.

The protein localises to the cytoplasm. It carries out the reaction (R)-pantothenate + ATP = (R)-4'-phosphopantothenate + ADP + H(+). The protein operates within cofactor biosynthesis; coenzyme A biosynthesis; CoA from (R)-pantothenate: step 1/5. Catalyzes the phosphorylation of pantothenate (Pan), the first step in CoA biosynthesis. This Rubrobacter xylanophilus (strain DSM 9941 / JCM 11954 / NBRC 16129 / PRD-1) protein is Type III pantothenate kinase.